Here is a 237-residue protein sequence, read N- to C-terminus: MGRGKIEIKRIENTTNRQVTFSKRRGGLLKKAHELSVLCDAELGLIIFSSSGKLFEYSSASSSMKKIIERYQKVSGARITEYDNQHLYCEMTRMKNENEKLQTNIRRMMGEDLTSLTMTELHHLGQQLESASSRVRSRKNQLMLQQLENLRRKERILEDQNSHLCRLLAEQQAAVEGVQEPLLEFGVFCPPPDNKTAAAANAGPLHLGHHLPAFRLQPTQPNLQESSIVPNRPVLQL.

Residues 1 to 61 (MGRGKIEIKR…GKLFEYSSAS (61 aa)) form the MADS-box domain. The region spanning 84 to 174 (NQHLYCEMTR…CRLLAEQQAA (91 aa)) is the K-box domain.

In terms of tissue distribution, expression specific for female reproductive structures: strong at the adaxial base of the cupules, where ovules will later develop, then in the outermost cell layer of the nucellus, in the inner envelope, and in the inner half of the middle envelope at late stage of ovule development.

The protein localises to the nucleus. Probable transcription factor. This Gnetum gnemon (Spanish joint-fir) protein is MADS-box protein GGM13 (GGM13).